A 58-amino-acid polypeptide reads, in one-letter code: MSPQTETKASVGFKAGVKDYKLTYYTPEYETKDTDILAAFRVTPQPGVPPEEAGAAVA.

A propeptide spanning residues 1–2 is cleaved from the precursor; that stretch reads MS. Proline 3 bears the N-acetylproline mark. At lysine 14 the chain carries N6,N6,N6-trimethyllysine.

It belongs to the RuBisCO large chain family. Type I subfamily. Heterohexadecamer of 8 large chains and 8 small chains.

The protein resides in the plastid. It localises to the chloroplast. The enzyme catalyses 2 (2R)-3-phosphoglycerate + 2 H(+) = D-ribulose 1,5-bisphosphate + CO2 + H2O. It carries out the reaction D-ribulose 1,5-bisphosphate + O2 = 2-phosphoglycolate + (2R)-3-phosphoglycerate + 2 H(+). RuBisCO catalyzes two reactions: the carboxylation of D-ribulose 1,5-bisphosphate, the primary event in carbon dioxide fixation, as well as the oxidative fragmentation of the pentose substrate in the photorespiration process. Both reactions occur simultaneously and in competition at the same active site. In Euphorbia characias (Albanian spurge), this protein is Ribulose bisphosphate carboxylase large chain (rbcL).